The primary structure comprises 149 residues: Large ribosomal subunit protein bL9 (149 aa).

The protein belongs to the bacterial ribosomal protein bL9 family.

Binds to the 23S rRNA. This is Large ribosomal subunit protein bL9 from Anaeromyxobacter dehalogenans (strain 2CP-1 / ATCC BAA-258).